Here is a 240-residue protein sequence, read N- to C-terminus: UDP-2,3-diacylglucosamine hydrolase (240 aa).

Asp-8, His-10, Asp-41, Asn-79, and His-114 together coordinate Mn(2+). 79–80 (NR) is a substrate binding site. Asp-122, Ser-160, Asn-164, Lys-167, and His-195 together coordinate substrate. The Mn(2+) site is built by His-195 and His-197.

Belongs to the LpxH family. It depends on Mn(2+) as a cofactor.

It localises to the cell inner membrane. The catalysed reaction is UDP-2-N,3-O-bis[(3R)-3-hydroxytetradecanoyl]-alpha-D-glucosamine + H2O = 2-N,3-O-bis[(3R)-3-hydroxytetradecanoyl]-alpha-D-glucosaminyl 1-phosphate + UMP + 2 H(+). Its pathway is glycolipid biosynthesis; lipid IV(A) biosynthesis; lipid IV(A) from (3R)-3-hydroxytetradecanoyl-[acyl-carrier-protein] and UDP-N-acetyl-alpha-D-glucosamine: step 4/6. Its function is as follows. Hydrolyzes the pyrophosphate bond of UDP-2,3-diacylglucosamine to yield 2,3-diacylglucosamine 1-phosphate (lipid X) and UMP by catalyzing the attack of water at the alpha-P atom. Involved in the biosynthesis of lipid A, a phosphorylated glycolipid that anchors the lipopolysaccharide to the outer membrane of the cell. The sequence is that of UDP-2,3-diacylglucosamine hydrolase from Escherichia coli O157:H7.